The following is a 182-amino-acid chain: Interferon beta (182 aa).

Residues 1-21 (MNNRWILHAAFLLCFSTTALS) form the signal peptide. Tyr24 carries the post-translational modification Phosphotyrosine. Residues Asn50, Asn90, and Asn97 are each glycosylated (N-linked (GlcNAc...) asparagine).

It belongs to the alpha/beta interferon family. As to quaternary structure, monomer. Post-translationally, this beta interferon does not have a disulfide bond.

Its subcellular location is the secreted. Functionally, type I interferon cytokine that plays a key role in the innate immune response to infection, developing tumors and other inflammatory stimuli. Signals via binding to high-affinity (IFNAR2) and low-affinity (IFNAR1) heterodimeric receptor, activating the canonical Jak-STAT signaling pathway resulting in transcriptional activation or repression of interferon-regulated genes that encode the effectors of the interferon response, such as antiviral proteins, regulators of cell proliferation and differentiation, and immunoregulatory proteins. Signals mostly via binding to a IFNAR1-IFNAR2 heterodimeric receptor, but can also function with IFNAR1 alone and independently of Jak-STAT pathways. Elicits a wide variety of responses, including antiviral and antibacterial activities, and can regulate the development of B-cells, myelopoiesis and lipopolysaccharide (LPS)-inducible production of tumor necrosis factor. Plays a role in neuronal homeostasis by regulating dopamine turnover and protecting dopaminergic neurons: acts by promoting neuronal autophagy and alpha-synuclein clearance, thereby preventing dopaminergic neuron loss. IFNB1 is more potent than interferon-alpha (IFN-alpha) in inducing the apoptotic and antiproliferative pathways required for control of tumor cell growth. This chain is Interferon beta, found in Mus musculus (Mouse).